The chain runs to 255 residues: Malonyl-[acyl-carrier protein] O-methyltransferase (255 aa).

This sequence belongs to the methyltransferase superfamily.

The catalysed reaction is malonyl-[ACP] + S-adenosyl-L-methionine = malonyl-[ACP] methyl ester + S-adenosyl-L-homocysteine. It participates in cofactor biosynthesis; biotin biosynthesis. Its function is as follows. Converts the free carboxyl group of a malonyl-thioester to its methyl ester by transfer of a methyl group from S-adenosyl-L-methionine (SAM). It allows to synthesize pimeloyl-ACP via the fatty acid synthetic pathway. The protein is Malonyl-[acyl-carrier protein] O-methyltransferase of Acinetobacter baylyi (strain ATCC 33305 / BD413 / ADP1).